The primary structure comprises 229 residues: Nisin biosynthesis regulatory protein NisR (229 aa).

One can recognise a Response regulatory domain in the interval 4-117 (KILIVDDDQE…QLVAKVEANI (114 aa)). 4-aspartylphosphate is present on Asp53. A DNA-binding region (ompR/PhoB-type) is located at residues 132-229 (EIRRDLGPIT…VRGLGYQWHG (98 aa)).

Phosphorylated by NisK.

In terms of biological role, member of the two-component regulatory system NisK/NisR involved in the regulation of the biosynthesis of lantibiotic nisin. NisR may function as a regulatory protein. This Lactococcus lactis subsp. lactis (Streptococcus lactis) protein is Nisin biosynthesis regulatory protein NisR (nisR).